A 333-amino-acid polypeptide reads, in one-letter code: Arylacetonitrilase (333 aa).

Positions 9–284 constitute a CN hydrolase domain; sequence VRVAVTQAEP…EGIIYADLEM (276 aa). Catalysis depends on Glu49, which acts as the Proton acceptor. Residue Lys129 is part of the active site. The Nucleophile role is filled by Cys164.

It belongs to the carbon-nitrogen hydrolase superfamily. Nitrilase family.

It catalyses the reaction a nitrile + 2 H2O = a carboxylate + NH4(+). The enzyme catalyses 4-chlorophenylacetonitrile + 2 H2O = 4-chlorophenylacetate + NH4(+). Functionally, nitrilase that hydrolyzes preferentially phenylacetonitrile, (R,S)-mandelonitrile, and 3-indolylacetonitrile. The sequence is that of Arylacetonitrilase from Aspergillus oryzae (strain ATCC 42149 / RIB 40) (Yellow koji mold).